Consider the following 429-residue polypeptide: Endo-beta-1,4-galactanase (429 aa).

The signal sequence occupies residues 1–21; the sequence is MKSKVKMFFAAAIVWSACSST. Residue 146-149 participates in substrate binding; it reads DPAK. Glutamate 194 functions as the Proton donor in the catalytic mechanism. Residues 233–234 and histidine 267 each bind substrate; that span reads TN. Glutamate 292 serves as the catalytic Nucleophile. A substrate-binding site is contributed by threonine 296. Aspartate 301, aspartate 303, histidine 305, and asparagine 307 together coordinate Ca(2+). Residues lysine 311 and aspartate 388 each coordinate substrate. 2 residues coordinate Ca(2+): serine 396 and aspartate 399.

It belongs to the glycosyl hydrolase 53 family. Requires Ca(2+) as cofactor.

It localises to the secreted. The catalysed reaction is The enzyme specifically hydrolyzes (1-&gt;4)-beta-D-galactosidic linkages in type I arabinogalactans.. Functionally, involved in galactan degradation. Degrades arabinose-free galactan to galactooligosaccharides, producing galactotetraose as the main product along with galactotriose, galactobiose, and galactose. Is also able to degrade galactotetraose, galactotriose and galactobiose, suggesting an additional exo-mode of activity. May hydrolyze the beta-1,4-galactan linkages of the galactan portion of arabinogalactan type I, a pectic plant polysaccharide from which most of the arabinose has been removed. This is Endo-beta-1,4-galactanase from Bacillus subtilis (strain 168).